A 470-amino-acid chain; its full sequence is Nuclear receptor subfamily 0 group B member 1 (470 aa).

3 repeat units span residues 1 to 67 (MAGE…YRCC), 68 to 133 (FCGK…YRCC), and 134 to 200 (FCGE…YRCC). The 4 X 67 AA tandem repeats stretch occupies residues 1 to 253 (MAGENHQWQG…RPVALKSPQV (253 aa)). Short sequence motifs (LXXLL motif) lie at residues 13–17 (LYNML), 80–84 (LYSML), and 146–150 (LYSLL). One copy of the 4; truncated repeat lies at 201–253 (FCGEDHPQQGSTLYCMPTSTNQAQAAPEERPRAPWWDTSSGALRPVALKSPQV). The NR LBD domain occupies 205–469 (DHPQQGSTLY…DMMLEMLCTK (265 aa)). Positions 461–466 (MMLEML) match the AF-2 motif motif.

The protein belongs to the nuclear hormone receptor family. NR0 subfamily. In terms of assembly, homodimer. Interacts with NR5A1, NR5A2, NR0B2 and with COPS2. Interacts with ESRRB; represses ESRRB activity at the GATA6 promoter.

The protein resides in the nucleus. Its subcellular location is the cytoplasm. Its function is as follows. Nuclear receptor that lacks a DNA-binding domain and acts as a corepressor that inhibits the transcriptional activity of other nuclear receptors through heterodimeric interactions. Component of a cascade required for the development of the hypothalamic-pituitary-adrenal-gonadal axis. May also have a role in the development of the embryo and in the maintenance of embryonic stem cell pluripotency. In Pan troglodytes (Chimpanzee), this protein is Nuclear receptor subfamily 0 group B member 1 (NR0B1).